A 147-amino-acid chain; its full sequence is UPF0306 protein YhbP (147 aa).

This sequence belongs to the UPF0306 family.

In Shigella boydii serotype 4 (strain Sb227), this protein is UPF0306 protein YhbP.